A 439-amino-acid polypeptide reads, in one-letter code: Serine hydroxymethyltransferase (439 aa).

Ala-126–Val-128 contributes to the (6S)-5,6,7,8-tetrahydrofolate binding site. At Lys-232 the chain carries N6-(pyridoxal phosphate)lysine.

Belongs to the SHMT family. In terms of assembly, homodimer. It depends on pyridoxal 5'-phosphate as a cofactor.

The protein localises to the cytoplasm. It participates in amino-acid biosynthesis; glycine biosynthesis; glycine from L-serine: step 1/1. Functionally, catalyzes the reversible interconversion of serine and glycine with a modified folate serving as the one-carbon carrier. Also exhibits a pteridine-independent aldolase activity toward beta-hydroxyamino acids, producing glycine and aldehydes, via a retro-aldol mechanism. In Staphylothermus marinus (strain ATCC 43588 / DSM 3639 / JCM 9404 / F1), this protein is Serine hydroxymethyltransferase.